Consider the following 149-residue polypeptide: Large ribosomal subunit protein uL15 (149 aa).

2 stretches are compositionally biased toward basic residues: residues 1–13 (MPTRLTKTRKHRG) and 21–42 (RIGKHRKHPGGRGKAGGQHHHR). The tract at residues 1-44 (MPTRLTKTRKHRGNVSAGKGRIGKHRKHPGGRGKAGGQHHHRTN) is disordered.

It belongs to the universal ribosomal protein uL15 family. As to quaternary structure, component of the large ribosomal subunit. Mature ribosomes consist of a small (40S) and a large (60S) subunit. The 40S subunit contains about 32 different proteins and 1 molecule of RNA (18S). The 60S subunit contains 45 different proteins and 3 molecules of RNA (25S, 5.8S and 5S).

It is found in the cytoplasm. Component of the ribosome, a large ribonucleoprotein complex responsible for the synthesis of proteins in the cell. The small ribosomal subunit (SSU) binds messenger RNAs (mRNAs) and translates the encoded message by selecting cognate aminoacyl-transfer RNA (tRNA) molecules. The large subunit (LSU) contains the ribosomal catalytic site termed the peptidyl transferase center (PTC), which catalyzes the formation of peptide bonds, thereby polymerizing the amino acids delivered by tRNAs into a polypeptide chain. The nascent polypeptides leave the ribosome through a tunnel in the LSU and interact with protein factors that function in enzymatic processing, targeting, and the membrane insertion of nascent chains at the exit of the ribosomal tunnel. In Candida albicans (strain SC5314 / ATCC MYA-2876) (Yeast), this protein is Large ribosomal subunit protein uL15.